The primary structure comprises 453 residues: MSPVSHVAVLAFPFGTHAAPLLTLVNRLAASAPDIIFSFFSTSSSITTIFSPTNLISIGSNIKPYAVWDGSPEGFVFSGNPREPIEYFLNAAPDNFDKAMKKAVEDTGVNISCLLTDAFLWFAADFSEKIGVPWIPVWTAASCSLCLHVYTDEIRSRFAEFDIAEKAEKTIDFIPGLSAISFSDLPEELIMEDSQSIFALTLHNMGLKLHKATAVAVNSFEEIDPIITNHLRSTNQLNILNIGPLQTLSSSIPPEDNECLKWLQTQKESSVVYLSFGTVINPPPNEMAALASTLESRKIPFLWSLRDEARKHLPENFIDRTSTFGKIVSWAPQLHVLENPAIGVFVTHCGWNSTLESIFCRVPVIGRPFFGDQKVNARMVEDVWKIGVGVKGGVFTEDETTRVLELVLFSDKGKEMRQNVGRLKEKAKDAVKANGSSTRNFESLLAAFNKLDS.

His-17 (proton acceptor) is an active-site residue. Residue His-17 coordinates an anthocyanidin. Residue Asp-117 is the Charge relay of the active site. Thr-139 lines the UDP-alpha-D-glucose pocket. Position 148 (His-148) interacts with an anthocyanidin. Residues Ala-331, Gln-333, His-348, Trp-351, Asn-352, Ser-353, and Glu-356 each coordinate UDP-alpha-D-glucose. Gly-371 contributes to the an anthocyanidin binding site. Positions 372 and 373 each coordinate UDP-alpha-D-glucose.

It belongs to the UDP-glycosyltransferase family.

It carries out the reaction an anthocyanidin + UDP-alpha-D-glucose + H(+) = an anthocyanidin 3-O-beta-D-glucoside + UDP. The catalysed reaction is delphinidin + UDP-alpha-D-glucose = delphinidin 3-O-beta-D-glucoside + UDP. The enzyme catalyses pelargonidin + UDP-alpha-D-glucose = pelargonidin 3-O-beta-D-glucoside + UDP. It catalyses the reaction cyanidin + UDP-alpha-D-glucose = cyanidin 3-O-beta-D-glucoside + UDP + H(+). The protein operates within pigment biosynthesis; anthocyanin biosynthesis. In the presence of other necessary color factors, this glycosylation reaction allows the accumulation of anthocyanin pigments. Anthocyanidins are the preferred substrates, while flavonols are only a minor substrate in vitro. The protein is Anthocyanidin 3-O-glucosyltransferase of Gentiana triflora (Clustered gentian).